Consider the following 921-residue polypeptide: Isoleucine--tRNA ligase (921 aa).

A 'HIGH' region motif is present at residues 57–67; the sequence is PYANGELHMGH. Glu-552 is a binding site for L-isoleucyl-5'-AMP. A 'KMSKS' region motif is present at residues 593–597; it reads KMSKS. Residue Lys-596 participates in ATP binding. Cys-888, Cys-891, Cys-908, and Cys-911 together coordinate Zn(2+).

It belongs to the class-I aminoacyl-tRNA synthetase family. IleS type 1 subfamily. Monomer. Zn(2+) serves as cofactor.

It localises to the cytoplasm. It catalyses the reaction tRNA(Ile) + L-isoleucine + ATP = L-isoleucyl-tRNA(Ile) + AMP + diphosphate. Functionally, catalyzes the attachment of isoleucine to tRNA(Ile). As IleRS can inadvertently accommodate and process structurally similar amino acids such as valine, to avoid such errors it has two additional distinct tRNA(Ile)-dependent editing activities. One activity is designated as 'pretransfer' editing and involves the hydrolysis of activated Val-AMP. The other activity is designated 'posttransfer' editing and involves deacylation of mischarged Val-tRNA(Ile). The polypeptide is Isoleucine--tRNA ligase (Listeria welshimeri serovar 6b (strain ATCC 35897 / DSM 20650 / CCUG 15529 / CIP 8149 / NCTC 11857 / SLCC 5334 / V8)).